We begin with the raw amino-acid sequence, 169 residues long: Large ribosomal subunit protein uL10 (169 aa).

The protein belongs to the universal ribosomal protein uL10 family. Part of the ribosomal stalk of the 50S ribosomal subunit. The N-terminus interacts with L11 and the large rRNA to form the base of the stalk. The C-terminus forms an elongated spine to which L12 dimers bind in a sequential fashion forming a multimeric L10(L12)X complex.

Functionally, forms part of the ribosomal stalk, playing a central role in the interaction of the ribosome with GTP-bound translation factors. This Orientia tsutsugamushi (strain Ikeda) (Rickettsia tsutsugamushi) protein is Large ribosomal subunit protein uL10.